The sequence spans 238 residues: Dolichyldiphosphatase 1 (238 aa).

A run of 4 helical transmembrane segments spans residues 33 to 53 (LAYL…LIIF), 100 to 120 (PSSH…FLYL), 130 to 150 (FLDL…AFLV), and 162 to 182 (WSQV…WFIF).

It belongs to the dolichyldiphosphatase family.

It is found in the endoplasmic reticulum membrane. The catalysed reaction is a di-trans,poly-cis-dolichyl diphosphate + H2O = a di-trans,poly-cis-dolichyl phosphate + phosphate + H(+). The protein operates within protein modification; protein glycosylation. Its function is as follows. Required for efficient N-glycosylation. Necessary for maintaining optimal levels of dolichol-linked oligosaccharides. Hydrolyzes dolichyl pyrophosphate at a very high rate and dolichyl monophosphate at a much lower rate. Does not act on phosphatidate. In Homo sapiens (Human), this protein is Dolichyldiphosphatase 1 (DOLPP1).